The following is a 323-amino-acid chain: Ferrochelatase (323 aa).

Fe cation contacts are provided by histidine 196 and glutamate 277.

Belongs to the ferrochelatase family.

The protein localises to the cytoplasm. It catalyses the reaction heme b + 2 H(+) = protoporphyrin IX + Fe(2+). It participates in porphyrin-containing compound metabolism; protoheme biosynthesis; protoheme from protoporphyrin-IX: step 1/1. Its function is as follows. Catalyzes the ferrous insertion into protoporphyrin IX. This is Ferrochelatase from Haemophilus influenzae (strain 86-028NP).